Reading from the N-terminus, the 125-residue chain is uncharacterized protein (125 aa).

This is an uncharacterized protein from Mycobacterium bovis (strain ATCC BAA-935 / AF2122/97).